The sequence spans 269 residues: Troponin T, fast skeletal muscle (269 aa).

The segment covering methionine 1 to alanine 23 has biased composition (acidic residues). Residues methionine 1–lysine 72 are disordered. Serine 2 bears the N-acetylserine mark. Position 2 is a phosphoserine (serine 2). The span at alanine 24–glutamate 34 shows a compositional bias: basic and acidic residues. Over residues glutamate 35–glutamate 47 the composition is skewed to acidic residues. Positions proline 60–lysine 72 are enriched in basic and acidic residues. Residue serine 88 is modified to Phosphoserine. The span at arginine 111–lysine 153 shows a compositional bias: basic and acidic residues. The interval arginine 111–leucine 158 is disordered. 3 positions are modified to phosphoserine: serine 159, serine 166, and serine 167. The tract at residues arginine 245–lysine 269 is disordered.

It belongs to the troponin T family. In terms of tissue distribution, in fetal and adult fast skeletal muscles, with a higher level expression in fetal than in adult muscle.

Its function is as follows. Troponin T is the tropomyosin-binding subunit of troponin, the thin filament regulatory complex which confers calcium-sensitivity to striated muscle actomyosin ATPase activity. The protein is Troponin T, fast skeletal muscle (TNNT3) of Homo sapiens (Human).